A 122-amino-acid chain; its full sequence is uncharacterized protein (122 aa).

Positions Met1–Cys20 are cleaved as a signal peptide.

It localises to the secreted. This is an uncharacterized protein from Homo sapiens (Human).